Reading from the N-terminus, the 313-residue chain is Ankyrin repeat family A protein 2 (313 aa).

5 ANK repeats span residues 148-180 (ANSL…HTDE), 181-213 (EGFT…LLGK), 214-246 (GRES…EYDW), 247-279 (NGGT…IETD), and 280-313 (SGYN…NIKE).

As to quaternary structure, interacts (via ANK repeats) with CCDC8 (via PxLPxI/L motif); mediates the interaction with the 3M complex which is composed of CCDC8, CUL7 and OBSL1. Interacts (via ANK repeats) with HDAC4 (via PxLPxI/L motif). Interacts (via ANK repeats) with HDAC5 (via PxLPxI/L motif). Interacts (via ANK repeats) with LRP2/megalin (via PxLPxI/L motif). Interacts (via ANK repeats) with RFX7 (via PxLPxI/L motif). Interacts with AHRR. Interacts with NEK6.

It is found in the cytoplasm. Its subcellular location is the cytoskeleton. It localises to the membrane. In terms of biological role, may regulate the interaction between the 3M complex and the histone deacetylases HDAC4 and HDAC5. May also regulate LRP2/megalin. This chain is Ankyrin repeat family A protein 2 (ANKRA2), found in Homo sapiens (Human).